The chain runs to 328 residues: Malate dehydrogenase (328 aa).

13–19 (GAAGQIS) serves as a coordination point for NAD(+). 2 residues coordinate substrate: arginine 94 and arginine 100. Residues asparagine 107, glutamine 114, and 131–133 (VGN) each bind NAD(+). Positions 133 and 164 each coordinate substrate. Histidine 189 acts as the Proton acceptor in catalysis.

Belongs to the LDH/MDH superfamily. MDH type 2 family.

The enzyme catalyses (S)-malate + NAD(+) = oxaloacetate + NADH + H(+). Functionally, catalyzes the reversible oxidation of malate to oxaloacetate. The protein is Malate dehydrogenase of Alcanivorax borkumensis (strain ATCC 700651 / DSM 11573 / NCIMB 13689 / SK2).